A 555-amino-acid chain; its full sequence is CTP synthase (555 aa).

The interval 1–267 (MTKFVFVTGG…AQQVLKFMHL (267 aa)) is amidoligase domain. Serine 13 is a CTP binding site. Serine 13 contacts UTP. ATP-binding positions include 14-19 (SIGKGI) and aspartate 71. 2 residues coordinate Mg(2+): aspartate 71 and glutamate 141. Residues 148–150 (DIE), 188–193 (KTKPTQ), and lysine 224 each bind CTP. UTP-binding positions include 188-193 (KTKPTQ) and lysine 224. Position 242 (alanine 242) interacts with ATP. The Glutamine amidotransferase type-1 domain occupies 299–535 (YVQLSDAYLS…VGACLADNGN (237 aa)). L-glutamine is bound at residue glycine 354. Cysteine 381 functions as the Nucleophile; for glutamine hydrolysis in the catalytic mechanism. L-glutamine is bound by residues 382–385 (LGMQ), glutamate 405, and arginine 463. Residues histidine 508 and glutamate 510 contribute to the active site. The disordered stretch occupies residues 536-555 (NANHHDSTPAEPLVSEPLSS).

Belongs to the CTP synthase family. As to quaternary structure, homotetramer.

It carries out the reaction UTP + L-glutamine + ATP + H2O = CTP + L-glutamate + ADP + phosphate + 2 H(+). It catalyses the reaction L-glutamine + H2O = L-glutamate + NH4(+). The enzyme catalyses UTP + NH4(+) + ATP = CTP + ADP + phosphate + 2 H(+). Its pathway is pyrimidine metabolism; CTP biosynthesis via de novo pathway; CTP from UDP: step 2/2. Allosterically activated by GTP, when glutamine is the substrate; GTP has no effect on the reaction when ammonia is the substrate. The allosteric effector GTP functions by stabilizing the protein conformation that binds the tetrahedral intermediate(s) formed during glutamine hydrolysis. Inhibited by the product CTP, via allosteric rather than competitive inhibition. Catalyzes the ATP-dependent amination of UTP to CTP with either L-glutamine or ammonia as the source of nitrogen. Regulates intracellular CTP levels through interactions with the four ribonucleotide triphosphates. This chain is CTP synthase, found in Acaryochloris marina (strain MBIC 11017).